A 172-amino-acid chain; its full sequence is Ribosome maturation factor RimM (172 aa).

The PRC barrel domain occupies 95-168 (AEGEFYYHQI…RVDVEIMEGL (74 aa)).

This sequence belongs to the RimM family. In terms of assembly, binds ribosomal protein uS19.

It localises to the cytoplasm. An accessory protein needed during the final step in the assembly of 30S ribosomal subunit, possibly for assembly of the head region. Essential for efficient processing of 16S rRNA. May be needed both before and after RbfA during the maturation of 16S rRNA. It has affinity for free ribosomal 30S subunits but not for 70S ribosomes. In Streptococcus equi subsp. equi (strain 4047), this protein is Ribosome maturation factor RimM.